A 207-amino-acid chain; its full sequence is ConoCAP (207 aa).

The N-terminal stretch at 1–21 is a signal peptide; sequence MVSLGHVLFVILLPVLLPVAA. A propeptide spanning residues 22–48 is cleaved from the precursor; sequence DDPDDQMLSQISLPSSSRSEYDDNDVS. A disulfide bond links Cys-53 and Cys-59. At Gly-60 the chain carries Glycine amide. The propeptide occupies 63–82; that stretch reads HRDRSRRQERYGKRLIPVLA. Cysteines 87 and 92 form a disulfide. Asn-94 carries the asparagine amide modification. Residues 98–160 constitute a propeptide that is removed on maturation; it reads SLSGAGPALS…RDPAASGDLS (63 aa). Residues 131 to 155 are disordered; sequence ARHEQQQQLLQQREQRGLESRDPAA. Over residues 143-152 the composition is skewed to basic and acidic residues; sequence REQRGLESRD. Residues Cys-165 and Cys-171 are joined by a disulfide bond. At Gly-173 the chain carries Glycine amide. The propeptide occupies 177–207; the sequence is TLYSPWLERMNEVADDRSARNALCTRLGWRE.

In terms of tissue distribution, expressed by the venom duct.

Its subcellular location is the secreted. In terms of biological role, in contrast to other members of the CCAP family which are cardio-accelerators, conoCAP-a decreases the heart frequency in Drosophila larvae (26%), rats and zebrafish embryos. It also reduces the blood pressure in rats. It decreases systolic calcium in ventricular cardiac myocytes, indicating that it may act via impairment of intracellular calcium trafficking. Functionally, synthetic conoCAP-b decreases the heart frequency of 23% in Drosophila larvae. Its function is as follows. Synthetic conoCAP-c decreases the heart frequency of 12% in Drosophila larvae. The chain is ConoCAP (conoCAP) from Conus villepinii (Villepin's cone).